The primary structure comprises 135 residues: Biglycan (135 aa).

LRR repeat units follow at residues 4-24 (KLNY…DLPE), 25-46 (TLNE…DLLR), 49-72 (KLYR…SFLP), 73-95 (TLRE…PDLK), and 96-117 (LLQV…DFCP). N-linked (GlcNAc...) asparagine glycosylation occurs at N65. A glycan (N-linked (GlcNAc...) asparagine) is linked at N106.

It belongs to the small leucine-rich proteoglycan (SLRP) family. SLRP class I subfamily. Homodimer. Forms a ternary complex with MFAP2 and ELN. In terms of processing, the two attached glycosaminoglycan chains can be either chondroitin sulfate or dermatan sulfate. Found in several connective tissues, especially in articular cartilages.

It is found in the secreted. The protein resides in the extracellular space. The protein localises to the extracellular matrix. Functionally, may be involved in collagen fiber assembly. The chain is Biglycan (BGN) from Oryctolagus cuniculus (Rabbit).